A 151-amino-acid chain; its full sequence is uncharacterized protein (151 aa).

This is an uncharacterized protein from Homo sapiens (Human).